Reading from the N-terminus, the 517-residue chain is MKPTKPEGPKKPNKSNEEAEELEGDNKEDLEGPKKPNKSNEEAEELEGDNKEDLEGPKKPNKSNEEAEELEGDKQKDKKDGIFVLNYDDEYEEDLEYDDEYEEDLEYDDEYEEDLEYDDEEYDDEYEEDLEGDNKPHKEDLEGDNKPHKEDLEGDNKPHKEDLEGDKQKEEEEKQKEEEEKLKDCPWHWFHQIYPKHWGCPHRKHRDRKSVPAKERELVPAQSTKRDTDPDSEASLKSNYAHLWVHCKLCSGFNYKKILKSKNNVCEQCGSHLKMHSSDRIDLMLDPKTWAPMHEGLLSLDPIEFHSEKDPYKDRVASYKRKTGLSEAIQTGRGYLKRIHLGIGLMDFQFMGGSMGSVVGERITRLVEYATNRVLPLILVCASGGARMQEGSLSLMQMAKISSALSDYQFNRTVFYVALLTSPTTGGVTASFGMLGDIILAEPNAYIAFAGKRVIEQTLNIEVPEGSQTAEYLFDKGLFDQIVPRNPLKGSLSELFNFHGFVTLNSQVINIYNYLYS.

Basic and acidic residues-rich tracts occupy residues 1–17, 24–41, 48–65, and 72–81; these read MKPT…KSNE, GDNK…KSNE, and GDKQKDKKDG. Disordered stretches follow at residues 1 to 179 and 204 to 234; these read MKPT…KEEE and KHRD…DSEA. Residues 87–131 show a composition bias toward acidic residues; that stretch reads YDDEYEEDLEYDDEYEEDLEYDDEYEEDLEYDDEEYDDEYEEDLE. Composition is skewed to basic and acidic residues over residues 132 to 179 and 209 to 229; these read GDNK…KEEE and KSVP…RDTD. A CoA carboxyltransferase N-terminal domain is found at 243–514; that stretch reads LWVHCKLCSG…NSQVINIYNY (272 aa). Zn(2+) contacts are provided by C247, C250, C266, and C269. The segment at 247–269 adopts a C4-type zinc-finger fold; the sequence is CKLCSGFNYKKILKSKNNVCEQC.

Belongs to the AccD/PCCB family. In terms of assembly, acetyl-CoA carboxylase is a heterohexamer composed of biotin carboxyl carrier protein, biotin carboxylase and 2 subunits each of ACCase subunit alpha and ACCase plastid-coded subunit beta (accD). Zn(2+) is required as a cofactor.

The protein resides in the plastid. Its subcellular location is the chloroplast stroma. The catalysed reaction is N(6)-carboxybiotinyl-L-lysyl-[protein] + acetyl-CoA = N(6)-biotinyl-L-lysyl-[protein] + malonyl-CoA. It functions in the pathway lipid metabolism; malonyl-CoA biosynthesis; malonyl-CoA from acetyl-CoA: step 1/1. In terms of biological role, component of the acetyl coenzyme A carboxylase (ACC) complex. Biotin carboxylase (BC) catalyzes the carboxylation of biotin on its carrier protein (BCCP) and then the CO(2) group is transferred by the transcarboxylase to acetyl-CoA to form malonyl-CoA. The polypeptide is Acetyl-coenzyme A carboxylase carboxyl transferase subunit beta, chloroplastic (Oenothera elata subsp. hookeri (Hooker's evening primrose)).